Consider the following 599-residue polypeptide: Aspartate--tRNA(Asp/Asn) ligase (599 aa).

E180 provides a ligand contact to L-aspartate. The segment at 204-207 is aspartate; it reads QLLK. R226 is an L-aspartate binding site. ATP contacts are provided by residues 226-228 and Q235; that span reads RDE. Position 457 (H457) interacts with L-aspartate. E491 is an ATP binding site. Residue R498 participates in L-aspartate binding. 543-546 contacts ATP; sequence GWDR. A disordered region spans residues 565–599; it reads KAGGGRDPLTGAPAPISDEQRAETGVDYDPDADEN. The span at 590–599 shows a compositional bias: acidic residues; sequence VDYDPDADEN.

Belongs to the class-II aminoacyl-tRNA synthetase family. Type 1 subfamily. In terms of assembly, homodimer.

The protein localises to the cytoplasm. It catalyses the reaction tRNA(Asx) + L-aspartate + ATP = L-aspartyl-tRNA(Asx) + AMP + diphosphate. Aspartyl-tRNA synthetase with relaxed tRNA specificity since it is able to aspartylate not only its cognate tRNA(Asp) but also tRNA(Asn). Reaction proceeds in two steps: L-aspartate is first activated by ATP to form Asp-AMP and then transferred to the acceptor end of tRNA(Asp/Asn). The chain is Aspartate--tRNA(Asp/Asn) ligase from Bifidobacterium longum (strain DJO10A).